The primary structure comprises 185 residues: Large ribosomal subunit protein uL22 (185 aa).

Belongs to the universal ribosomal protein uL22 family. In terms of assembly, component of the large ribosomal subunit. Mature ribosomes consist of a small (40S) and a large (60S) subunit. The 40S subunit contains about 32 different proteins and 1 molecule of RNA (18S). The 60S subunit contains 45 different proteins and 3 molecules of RNA (25S, 5.8S and 5S).

Its subcellular location is the cytoplasm. Component of the ribosome, a large ribonucleoprotein complex responsible for the synthesis of proteins in the cell. The small ribosomal subunit (SSU) binds messenger RNAs (mRNAs) and translates the encoded message by selecting cognate aminoacyl-transfer RNA (tRNA) molecules. The large subunit (LSU) contains the ribosomal catalytic site termed the peptidyl transferase center (PTC), which catalyzes the formation of peptide bonds, thereby polymerizing the amino acids delivered by tRNAs into a polypeptide chain. The nascent polypeptides leave the ribosome through a tunnel in the LSU and interact with protein factors that function in enzymatic processing, targeting, and the membrane insertion of nascent chains at the exit of the ribosomal tunnel. In Candida albicans (strain SC5314 / ATCC MYA-2876) (Yeast), this protein is Large ribosomal subunit protein uL22.